The chain runs to 526 residues: Germ cell-less protein-like 2 (526 aa).

A disordered region spans residues Met1–Pro85. Residues Ser49–Ser55 carry the Nuclear localization signal motif. The span at Cys62–Lys77 shows a compositional bias: basic and acidic residues. Positions Pro85–Arg91 match the Nuclear localization signal motif. In terms of domain architecture, BTB spans Ser108–Pro178.

In terms of assembly, interacts with CUL3. As to expression, expressed predominantly in testis.

Its subcellular location is the nucleus matrix. Its pathway is protein modification; protein ubiquitination. Functionally, possible function in spermatogenesis. Probable substrate-specific adapter of an E3 ubiquitin-protein ligase complex which mediates the ubiquitination and subsequent proteasomal degradation of target proteins. The protein is Germ cell-less protein-like 2 of Homo sapiens (Human).